Consider the following 502-residue polypeptide: Cysteine protease RavZ (502 aa).

Short sequence motifs (LIR) lie at residues D9 to E23 and E23 to K37. A catalytic region region spans residues S49 to L325. Catalysis depends on residues H176 and D197. Residues Y211–R217 form an alpha-3 helix region. C258 is an active-site residue. Residues P326 to T431 are membrane targeting region. Residues D429 to L443 carry the LIR 3 motif.

It is found in the secreted. It localises to the host cytoplasmic vesicle membrane. It catalyses the reaction [protein]-C-terminal L-amino acid-glycyl-phosphatidylethanolamide + H2O = a 1,2-diacyl-sn-glycero-3-phosphoethanolamine-N-glycine + [protein]-C-terminal &lt;stereo&gt;L-&lt;/stereo&gt;amino acid. It carries out the reaction [protein]-C-terminal L-amino acid-glycyl-phosphatidylserine + H2O = 1,2-diacyl-sn-glycero-3-phospho-L-serine-N-glycine + [protein]-C-terminal &lt;stereo&gt;L-&lt;/stereo&gt;amino acid. Cysteine protease effector that inhibits host cell autophagy by targeting lipid-conjugated ATG8 family proteins on pre-autophagosomal structures. Specifically hydrolyzes the amide bond between the C-terminal glycine residue and an adjacent aromatic residue in ATG8 proteins conjugated to phosphatidylethanolamine (PE), producing an ATG8 protein that cannot be reconjugated by host ATG7 and ATG3. Mechanistically, Ravz interacts with ATG8 proteins conjugated to PE via its LIR motifs, extracts them from the membrane of autophagosomes and integrates the PE part into its own lipid-binding site. It then removes the lipid component of the ATG8 protein. Also able to mediate delipidation of ATG8 proteins conjugated to phosphatidylserine (PS) during non-canonical autophagy. Inhibits host ubiquitin recruitment to bacteria-containing vacuoles, suggesting that it is able to mediate delipidation of other proteins in addition to ATG8 proteins. It is however not involved in the exclusion of autophagy adapters from bacteria-containing vacuoles decorated with ubiquitin. The protein is Cysteine protease RavZ of Legionella pneumophila subsp. pneumophila (strain Philadelphia 1 / ATCC 33152 / DSM 7513).